Here is a 31-residue protein sequence, read N- to C-terminus: Phallacidin proprotein 1 (31 aa).

A propeptide spanning residues Met-1–Pro-10 is cleaved from the precursor. The segment at residues Ala-11–Pro-17 is a cross-link (cyclopeptide (Ala-Pro)). The segment at residues Trp-12–Cys-16 is a cross-link (2'-cysteinyl-6'-hydroxytryptophan sulfoxide (Trp-Cys)). The propeptide occupies Cys-18 to Glu-31.

This sequence belongs to the MSDIN fungal toxin family. Post-translationally, processed by the macrocyclase-peptidase enzyme POPB to yield a toxic cyclic heptapeptide. POPB first removes 10 residues from the N-terminus. Conformational trapping of the remaining peptide forces the enzyme to release this intermediate rather than proceed to macrocyclization. The enzyme rebinds the remaining peptide in a different conformation and catalyzes macrocyclization of the N-terminal 7 residues.

Its function is as follows. Major toxin that belongs to the bicyclic heptapeptides called phallotoxins. Although structurally related to amatoxins, phallotoxins have a different mode of action, which is the stabilization of F-actin. Phallotoxins are poisonous when administered parenterally, but not orally because of poor absorption. In Amanita bisporigera (Destroying angel), this protein is Phallacidin proprotein 1 (PHA1_2).